Here is a 601-residue protein sequence, read N- to C-terminus: Coronin-like protein crn1 (601 aa).

5 WD repeats span residues 79–119 (GHTA…TVME), 132–172 (GHSR…AHVS), 174–213 (KMDVMCQSMSFNADGTRLVTTSRDKKVRVWDPRTDKPVSV), 220–260 (AKNP…EPIG), and 266–306 (DTGS…FHYL). Disordered stretches follow at residues 361 to 386 (SDIYPPAPSGKPSLTAEEWASGKDAQ) and 407 to 540 (SATV…VEEK). 3 stretches are compositionally biased toward basic and acidic residues: residues 419–429 (KHNEEKVETPK), 437–453 (KPKESAEEQKPSKEPEV), and 462–495 (KVEEPSKKRDEDNHQKEETVTQPKREKTPVEKSF). Residues serine 500 and serine 501 each carry the phosphoserine modification. Residues 507–526 (EDVKKEPSEEKKLEVSDEAP) show a composition bias toward basic and acidic residues. Phosphoserine is present on serine 553. A coiled-coil region spans residues 556 to 600 (NLADLNKRFEGFEKRYEEELAIRDWKIAQLEDKLAKLTEAIKEKC).

The protein belongs to the WD repeat coronin family. In terms of assembly, binds to F-actin.

This is Coronin-like protein crn1 (crn1) from Schizosaccharomyces pombe (strain 972 / ATCC 24843) (Fission yeast).